The following is a 2009-amino-acid chain: ADP-ribosylation factor guanine nucleotide-exchange factor SEC7 (2009 aa).

Residues 1–220 (MSEQNSVVNA…ISLSSNGSNT (220 aa)) are disordered. Polar residues predominate over residues 17–33 (ISSNVETASSVNPSVKP). Positions 37–53 (IKEEAKETNGEDQKCKG) are enriched in basic and acidic residues. Residues 91-118 (EGEDGDEDEDEDEDEDEDNGDEDDEDVD) are compositionally biased toward acidic residues. Positions 134–143 (SVSGESTESS) are enriched in low complexity. The span at 144-154 (SGEDEESDESD) shows a compositional bias: acidic residues. A compositionally biased stretch (low complexity) spans 155 to 165 (GNTSNSSSGDE). The span at 166–184 (SGSEEEEEEEEEEEEEENA) shows a compositional bias: acidic residues. The segment covering 194 to 209 (SVPTNDSTAPRSTHTR) has biased composition (polar residues). A compositionally biased stretch (low complexity) spans 210–220 (NISLSSNGSNT). Residues S212 and S215 each carry the phosphoserine modification. T334 is subject to Phosphothreonine. S447, S452, and S455 each carry phosphoserine. The HUS box motif lies at 653-657 (NYDCN). Residues 771–788 (SSARQESRSSLSNDVRSS) show a composition bias toward low complexity. The tract at residues 771–814 (SSARQESRSSLSNDVRSSIMTSNDDFKPTYEDEESRSLSSQNID) is disordered. Residue K797 forms a Glycyl lysine isopeptide (Lys-Gly) (interchain with G-Cter in ubiquitin) linkage. S807 carries the phosphoserine modification. One can recognise an SEC7 domain in the interval 824 to 1010 (LKLRKTALSE…LFNEIANNEI (187 aa)). Position 940 (D940) interacts with Mg(2+). Residues 1017–1220 (HQAMLSGDTN…QARVANPRVS (204 aa)) form an HDS1 domain region. S1226 is subject to Phosphoserine. The residue at position 1240 (T1240) is a Phosphothreonine. Over residues 1708-1723 (GRKSSVSHHQTTNDTS) the composition is skewed to polar residues. Positions 1708–1803 (GRKSSVSHHQ…KKTKHMKRNE (96 aa)) are disordered. Residues 1724–1751 (QHSDDDSNDRRENDSNISETVERAHQEE) show a composition bias toward basic and acidic residues. A phosphoserine mark is found at S1741 and S1752. The segment covering 1764-1777 (LNGQTKLNNGNSVP) has biased composition (polar residues). A C2 domain-interacting region (CIR) region spans residues 1836–1883 (FENEDFAHCIPYKEAIRITRLLEKSYEFSRDFNEDYGLRTRLVEARVV).

In terms of assembly, interacts with ARF1. Interacts (via C-terminus) with RSP5 ubiquitin ligase.

It localises to the cytoplasm. It is found in the golgi apparatus. The protein resides in the trans-Golgi network. The protein localises to the cytoplasmic vesicle. Its subcellular location is the COPI-coated vesicle membrane. It localises to the COPII-coated vesicle membrane. Functionally, guanine exchange factor that acts as an activator of ARF1 at the trans-Golgi network and is thus involved in vesicular budding and traffic between compartments of the Golgi apparatus. Activation of Arf (ADP-ribosylation factor) GTPases is essential for vesicle formation via recruitment of cargo adapters and coat proteins necessary for Golgi trafficking. Also plays an essential role in ER-to-Golgi traffic. SEC7 also acts as an effector of two Rab GTPases, YPT1 and YPT31/32. In Saccharomyces cerevisiae (strain ATCC 204508 / S288c) (Baker's yeast), this protein is ADP-ribosylation factor guanine nucleotide-exchange factor SEC7.